The following is a 211-amino-acid chain: Xanthine phosphoribosyltransferase (211 aa).

Xanthine is bound by residues L31 and N38. 138–142 (ANGRT) provides a ligand contact to 5-phospho-alpha-D-ribose 1-diphosphate. K166 is a binding site for xanthine.

The protein belongs to the purine/pyrimidine phosphoribosyltransferase family. Xpt subfamily. As to quaternary structure, homodimer.

The protein localises to the cytoplasm. It catalyses the reaction XMP + diphosphate = xanthine + 5-phospho-alpha-D-ribose 1-diphosphate. The protein operates within purine metabolism; XMP biosynthesis via salvage pathway; XMP from xanthine: step 1/1. Its function is as follows. Converts the preformed base xanthine, a product of nucleic acid breakdown, to xanthosine 5'-monophosphate (XMP), so it can be reused for RNA or DNA synthesis. This chain is Xanthine phosphoribosyltransferase, found in Chloroflexus aurantiacus (strain ATCC 29364 / DSM 637 / Y-400-fl).